The chain runs to 259 residues: 3-deoxy-manno-octulosonate cytidylyltransferase (259 aa).

It belongs to the KdsB family.

The protein resides in the cytoplasm. It carries out the reaction 3-deoxy-alpha-D-manno-oct-2-ulosonate + CTP = CMP-3-deoxy-beta-D-manno-octulosonate + diphosphate. It functions in the pathway nucleotide-sugar biosynthesis; CMP-3-deoxy-D-manno-octulosonate biosynthesis; CMP-3-deoxy-D-manno-octulosonate from 3-deoxy-D-manno-octulosonate and CTP: step 1/1. The protein operates within bacterial outer membrane biogenesis; lipopolysaccharide biosynthesis. In terms of biological role, activates KDO (a required 8-carbon sugar) for incorporation into bacterial lipopolysaccharide in Gram-negative bacteria. This chain is 3-deoxy-manno-octulosonate cytidylyltransferase, found in Alkalilimnicola ehrlichii (strain ATCC BAA-1101 / DSM 17681 / MLHE-1).